An 836-amino-acid chain; its full sequence is MSTRKSPFFKKAEISLASPKAIEIWTERYFPNGQPINEVTSSETVNYKTLKPEPHGLFCQTIFGPVVDFTCACGKKATKLVKNKKFRGYCPKCGVERTSSRVRRYRLGLIKLKQPVAHSLYVSHRPSPLRLCLGWSTKRLQAVLKAVEFCYLPLIFTTFQSERECFSFFPKSFLLLRSQLTQKNEVFLEPRSSGFNENLSSSFFFKEKKRSKRKTGKVFPLRTSPRLFHKKHQKNRPRLVFNHGVIEARLYGIAYDATWPKVEEFQEFLFYLWEQSFFYESSIPYYAFAKGVKSYKEEIPKREQSYALQTGGLALQQILSHHDSSRFEYDLIYLSKKVSMILEILKENMASLNLDYEDDQKEYKKLLSKVKKLDLLLLKWKRQRELYRDFEVGKTQPAWMILNNLPVLPPGLRPITSIGGLVVASDINSFYRKIIIRNKRMSPRNNLGIFDTTLGGSWLSWCYNLRQVQEAVDELLRTGSVDAGRPLKSLLDGLKGKKGRFRQHLLGKRVDYSGRSVIVVGPKLKLHQCGLPKEMAVELFQPFIIQQLRLQGIVFTVTAAKVLIADRKPIVWSVLGEILKRHPVLLNRAPTLHRLGIQAFLPRLVEGKAILLHPLVCPAFNADFDGDQMAVHVPLSAKTRAEALSLLWSRNQLLAPSSGQPQHLPTQDMVLGFYYLTCSLEKTLKRVDSLVSSRKLFFQSSFFLKKKNEETLKNSIPQNLYFSEFSQVKTAYDIGNLTLHTPIWVKWTSCVQTFVPERHSRLKETLLETRLTFSGQRQTLFIDTCQFFSPSFFFGKKVRFIRTTPGRIFMHWCFFEANAEMSSTPTSKEKKSLEKK.

Positions 71, 73, 90, and 93 each coordinate Zn(2+). 3 residues coordinate Mg(2+): Asp623, Asp625, and Asp627.

The protein belongs to the RNA polymerase beta' chain family. RpoC1 subfamily. As to quaternary structure, in plastids the minimal PEP RNA polymerase catalytic core is composed of four subunits: alpha, beta, beta', and beta''. When a (nuclear-encoded) sigma factor is associated with the core the holoenzyme is formed, which can initiate transcription. It depends on Mg(2+) as a cofactor. Zn(2+) is required as a cofactor.

Its subcellular location is the plastid. The protein resides in the chloroplast. The catalysed reaction is RNA(n) + a ribonucleoside 5'-triphosphate = RNA(n+1) + diphosphate. Functionally, DNA-dependent RNA polymerase catalyzes the transcription of DNA into RNA using the four ribonucleoside triphosphates as substrates. This is DNA-directed RNA polymerase subunit beta' (rpoC1) from Chlorella vulgaris (Green alga).